A 215-amino-acid polypeptide reads, in one-letter code: MKAFTQHTGLVCPLDRANVDTDQIIPKQFLKSIKRTGFGPNLFDEWRYLDVGQPNQDNSKRPINKDFVLNFPRYQGASVLLARENFGCGSSREHAPWALDEYGFRTVIAPSFADIFFNNSFKNGLLPIVLKDEEVDALFEQAEATEGYQLTVDLDAQTVTRPDGVQYSFEVDAFRKHCLLNGLDDIGLTLQDQDAIRAFEAKHQQSSPWLFGAIK.

This sequence belongs to the LeuD family. LeuD type 1 subfamily. Heterodimer of LeuC and LeuD.

It carries out the reaction (2R,3S)-3-isopropylmalate = (2S)-2-isopropylmalate. The protein operates within amino-acid biosynthesis; L-leucine biosynthesis; L-leucine from 3-methyl-2-oxobutanoate: step 2/4. Its function is as follows. Catalyzes the isomerization between 2-isopropylmalate and 3-isopropylmalate, via the formation of 2-isopropylmaleate. This chain is 3-isopropylmalate dehydratase small subunit, found in Ectopseudomonas mendocina (strain ymp) (Pseudomonas mendocina).